Here is a 119-residue protein sequence, read N- to C-terminus: Large ribosomal subunit protein uL18 (119 aa).

It belongs to the universal ribosomal protein uL18 family. In terms of assembly, part of the 50S ribosomal subunit; part of the 5S rRNA/L5/L18/L25 subcomplex. Contacts the 5S and 23S rRNAs.

Functionally, this is one of the proteins that bind and probably mediate the attachment of the 5S RNA into the large ribosomal subunit, where it forms part of the central protuberance. This is Large ribosomal subunit protein uL18 from Lactobacillus delbrueckii subsp. bulgaricus (strain ATCC 11842 / DSM 20081 / BCRC 10696 / JCM 1002 / NBRC 13953 / NCIMB 11778 / NCTC 12712 / WDCM 00102 / Lb 14).